The sequence spans 401 residues: Tumor necrosis factor receptor superfamily member 11B (401 aa).

A signal peptide spans 1–21 (MNKWLCCALLVLLDIIEWTTQ). TNFR-Cys repeat units lie at residues 24-62 (LPPK…KTLC), 65-105 (CPDH…NRVC), 107-142 (CEEG…NTVC), and 145-185 (CPDG…DNVC). 8 disulfides stabilise this stretch: Cys-41–Cys-54, Cys-44–Cys-62, Cys-65–Cys-80, Cys-83–Cys-97, Cys-87–Cys-105, Cys-107–Cys-118, Cys-124–Cys-142, and Cys-145–Cys-160. An N-linked (GlcNAc...) asparagine glycan is attached at Asn-98. Asn-165 and Asn-178 each carry an N-linked (GlcNAc...) asparagine glycan. An intrachain disulfide couples Cys-166 to Cys-185. Death domains follow at residues 198–269 (DVTL…MVKK) and 283–365 (RHLG…THSL). A glycan (N-linked (GlcNAc...) asparagine) is linked at Asn-289.

As to quaternary structure, homodimer. Interacts with TNFSF10 and TNFSF11. As to expression, highly expressed in liver, lung, stomach, intestines and calvaria. Highly expressed in decidua and placenta, and in embryo.

It localises to the secreted. In terms of biological role, acts as a decoy receptor for TNFSF11/RANKL and thereby neutralizes its function in osteoclastogenesis. Inhibits the activation of osteoclasts and promotes osteoclast apoptosis in vitro. Bone homeostasis seems to depend on the local ratio between TNFSF11 and TNFRSF11B. May also play a role in preventing arterial calcification. May act as decoy receptor for TNFSF10/TRAIL and protect against apoptosis. TNFSF10/TRAIL binding blocks the inhibition of osteoclastogenesis. In Mus musculus (Mouse), this protein is Tumor necrosis factor receptor superfamily member 11B (Tnfrsf11b).